We begin with the raw amino-acid sequence, 416 residues long: NADH-quinone oxidoreductase subunit D (416 aa).

Belongs to the complex I 49 kDa subunit family. As to quaternary structure, NDH-1 is composed of 14 different subunits. Subunits NuoB, C, D, E, F, and G constitute the peripheral sector of the complex.

Its subcellular location is the cell inner membrane. The enzyme catalyses a quinone + NADH + 5 H(+)(in) = a quinol + NAD(+) + 4 H(+)(out). NDH-1 shuttles electrons from NADH, via FMN and iron-sulfur (Fe-S) centers, to quinones in the respiratory chain. The immediate electron acceptor for the enzyme in this species is believed to be ubiquinone. Couples the redox reaction to proton translocation (for every two electrons transferred, four hydrogen ions are translocated across the cytoplasmic membrane), and thus conserves the redox energy in a proton gradient. The sequence is that of NADH-quinone oxidoreductase subunit D from Gluconacetobacter diazotrophicus (strain ATCC 49037 / DSM 5601 / CCUG 37298 / CIP 103539 / LMG 7603 / PAl5).